We begin with the raw amino-acid sequence, 325 residues long: Elongation factor P--(R)-beta-lysine ligase (325 aa).

Position 76–78 (76–78 (SPE)) interacts with substrate. ATP contacts are provided by residues 100-102 (RNE) and Asn109. Substrate is bound at residue Tyr118. 244-245 (EL) serves as a coordination point for ATP. Glu251 contributes to the substrate binding site. Gly300 is an ATP binding site.

This sequence belongs to the class-II aminoacyl-tRNA synthetase family. EpmA subfamily. As to quaternary structure, homodimer.

The enzyme catalyses D-beta-lysine + L-lysyl-[protein] + ATP = N(6)-((3R)-3,6-diaminohexanoyl)-L-lysyl-[protein] + AMP + diphosphate + H(+). Its function is as follows. With EpmB is involved in the beta-lysylation step of the post-translational modification of translation elongation factor P (EF-P). Catalyzes the ATP-dependent activation of (R)-beta-lysine produced by EpmB, forming a lysyl-adenylate, from which the beta-lysyl moiety is then transferred to the epsilon-amino group of a conserved specific lysine residue in EF-P. This is Elongation factor P--(R)-beta-lysine ligase from Edwardsiella ictaluri (strain 93-146).